The sequence spans 381 residues: Alkanesulfonate monooxygenase (381 aa).

This sequence belongs to the SsuD family. In terms of assembly, homotetramer.

It catalyses the reaction an alkanesulfonate + FMNH2 + O2 = an aldehyde + FMN + sulfite + H2O + 2 H(+). Functionally, catalyzes the desulfonation of aliphatic sulfonates. The chain is Alkanesulfonate monooxygenase from Shigella flexneri serotype 5b (strain 8401).